Consider the following 89-residue polypeptide: Putative RING finger protein 121R (89 aa).

Residues 45-78 form an RING-type zinc finger; the sequence is CPICLIAKVNTVLECTHVLCSNCVKKINVCPICR.

The chain is Putative RING finger protein 121R from Invertebrate iridescent virus 6 (IIV-6).